We begin with the raw amino-acid sequence, 141 residues long: Putative pre-16S rRNA nuclease (141 aa).

Belongs to the YqgF nuclease family.

It is found in the cytoplasm. Its function is as follows. Could be a nuclease involved in processing of the 5'-end of pre-16S rRNA. The sequence is that of Putative pre-16S rRNA nuclease from Vibrio parahaemolyticus serotype O3:K6 (strain RIMD 2210633).